The chain runs to 266 residues: Integral membrane protein 2B (266 aa).

The Cytoplasmic portion of the chain corresponds to 1 to 54; it reads MVKVTFNSALAQKEAKKDEPKSSEEALIAPPDAVAVDCKDPDDVVPVGQRRAWC. A helical; Signal-anchor for type II membrane protein transmembrane segment spans residues 55-75; sequence WCMCFGLAFMLAGVILGGAYL. The Lumenal segment spans residues 76-266; it reads YKYFALQPDD…KFAVETLICS (191 aa). The segment at 102-134 is necessary for interaction with APP and inhibitor effects on APP processing; that stretch reads EPSADAPAARYQTIEENIKIFEEDAVEFISVPV. In terms of domain architecture, BRICHOS spans 137-231; it reads FADSDPANIV…LCHDKETYKL (95 aa). Cystine bridges form between Cys-164/Cys-223 and Cys-248/Cys-265. Asn-170 is a glycosylation site (N-linked (GlcNAc...) asparagine).

This sequence belongs to the ITM2 family. As to quaternary structure, homodimer; disulfide-linked. Interacts with SPPL2A and SPPL2B. Interacts with APP. Mature BRI2 (mBRI2) interacts with the APP amyloid-beta A4 protein; the interaction occurs at the cell surface and in the endocytic compartments and enable alpha- and beta-secretase-induced APP cleavage inhibition. Mature BRI2 (mBRI2) interacts with the APP C99; the interaction occurs in the endocytic compartments and enable gamma-secretase-induced C99 cleavage inhibition. May form heterodimers with Bri23 peptide and APP amyloid-beta protein 40. Interacts with ADAM7 in sperm; the interaction increases following capacitation. The ectodomain C-terminal part of the imBRI2 is processed by furin producing a secreted Bri23 peptide and a mature BRI2, membrane form (mBRI2). The remaining part of the ectodomain of mBRI2 containing the BRICHOS domain is cleaved by ADAM10 and is secreted (BRI2C, soluble form). The membrane-bound N-terminal fragment (BRI2C, membrane form) is further proteolytically processed by SPPL2A and SPPL2B through regulated intramembrane proteolysis producing a secreted C-peptide and a BRI2 intracellular domain (BRI2 ICD) released in the cytosol. Shedding by ADAM10 facilitates intramembrane cleavage but is not absolutely required for BRI2 ICD generation. Post-translationally, glycosylation at Asn-170 is important for cell surface localization, but doesn't affect furin- and ADAM10-induced proteolytic processing.

It localises to the golgi apparatus membrane. The protein resides in the cell membrane. It is found in the endosome membrane. The protein localises to the secreted. Its function is as follows. Plays a regulatory role in the processing of the amyloid-beta A4 precursor protein (APP) and acts as an inhibitor of the amyloid-beta peptide aggregation and fibrils deposition. Plays a role in the induction of neurite outgrowth. Functions as a protease inhibitor by blocking access of secretases to APP cleavage sites. In terms of biological role, mature BRI2 (mBRI2) functions as a modulator of the amyloid-beta A4 precursor protein (APP) processing leading to a strong reduction in the secretion of secretase-processed amyloid-beta protein 40 and amyloid-beta protein 42. Functionally, bri23 peptide prevents aggregation of APP amyloid-beta protein 42 into toxic oligomers. This is Integral membrane protein 2B (Itm2b) from Rattus norvegicus (Rat).